Reading from the N-terminus, the 92-residue chain is Small ribosomal subunit protein bS18 (92 aa).

This sequence belongs to the bacterial ribosomal protein bS18 family. In terms of assembly, part of the 30S ribosomal subunit. Forms a tight heterodimer with protein bS6.

In terms of biological role, binds as a heterodimer with protein bS6 to the central domain of the 16S rRNA, where it helps stabilize the platform of the 30S subunit. The protein is Small ribosomal subunit protein bS18 of Caulobacter sp. (strain K31).